We begin with the raw amino-acid sequence, 151 residues long: Transcriptional regulator MraZ (151 aa).

SpoVT-AbrB domains follow at residues alanine 5–asparagine 52 and alanine 81–glutamate 124.

This sequence belongs to the MraZ family. In terms of assembly, forms oligomers.

The protein localises to the cytoplasm. Its subcellular location is the nucleoid. The protein is Transcriptional regulator MraZ of Haemophilus influenzae (strain PittGG).